The chain runs to 813 residues: Leucine--tRNA ligase (813 aa).

A 'HIGH' region motif is present at residues 40-51; the sequence is SYPSGSKLHAGH. The 'KMSKS' region signature appears at 572–576; the sequence is KMSKS. K575 contributes to the ATP binding site.

Belongs to the class-I aminoacyl-tRNA synthetase family.

The protein localises to the cytoplasm. It carries out the reaction tRNA(Leu) + L-leucine + ATP = L-leucyl-tRNA(Leu) + AMP + diphosphate. The chain is Leucine--tRNA ligase from Clostridium botulinum (strain Langeland / NCTC 10281 / Type F).